The chain runs to 85 residues: Large ribosomal subunit protein bL27 (85 aa).

Residues 1–22 (MAHKKGGGSSRNGRDSNAQRRG) are disordered.

It belongs to the bacterial ribosomal protein bL27 family.

This chain is Large ribosomal subunit protein bL27, found in Sorangium cellulosum (strain So ce56) (Polyangium cellulosum (strain So ce56)).